The chain runs to 612 residues: Dihydroxy-acid dehydratase (612 aa).

Asp81 contributes to the Mg(2+) binding site. Cys122 provides a ligand contact to [2Fe-2S] cluster. Positions 123 and 124 each coordinate Mg(2+). At Lys124 the chain carries N6-carboxylysine. A [2Fe-2S] cluster-binding site is contributed by Cys193. Residue Glu489 participates in Mg(2+) binding. Ser515 (proton acceptor) is an active-site residue.

This sequence belongs to the IlvD/Edd family. As to quaternary structure, homodimer. Requires [2Fe-2S] cluster as cofactor. It depends on Mg(2+) as a cofactor.

It carries out the reaction (2R)-2,3-dihydroxy-3-methylbutanoate = 3-methyl-2-oxobutanoate + H2O. It catalyses the reaction (2R,3R)-2,3-dihydroxy-3-methylpentanoate = (S)-3-methyl-2-oxopentanoate + H2O. It participates in amino-acid biosynthesis; L-isoleucine biosynthesis; L-isoleucine from 2-oxobutanoate: step 3/4. The protein operates within amino-acid biosynthesis; L-valine biosynthesis; L-valine from pyruvate: step 3/4. In terms of biological role, functions in the biosynthesis of branched-chain amino acids. Catalyzes the dehydration of (2R,3R)-2,3-dihydroxy-3-methylpentanoate (2,3-dihydroxy-3-methylvalerate) into 2-oxo-3-methylpentanoate (2-oxo-3-methylvalerate) and of (2R)-2,3-dihydroxy-3-methylbutanoate (2,3-dihydroxyisovalerate) into 2-oxo-3-methylbutanoate (2-oxoisovalerate), the penultimate precursor to L-isoleucine and L-valine, respectively. This chain is Dihydroxy-acid dehydratase, found in Azotobacter vinelandii (strain DJ / ATCC BAA-1303).